The chain runs to 489 residues: Palmitoyltransferase ZDHHC14 (489 aa).

Residues 1 to 60 lie on the Cytoplasmic side of the membrane; that stretch reads MPPGGGGPMKDCEYSQISTHSSSPMESPHKKKKIAARRKWEVFPGRNKFFCNGRIMMARQ. A helical membrane pass occupies residues 61-81; that stretch reads TGVFYLTLILILVTSGLFFAF. Over 82–89 the chain is Lumenal; it reads DCRYLAEK. A helical membrane pass occupies residues 90 to 110; that stretch reads ITPAIPVVGGILFFFVMGTLL. Residues 111-208 lie on the Cytoplasmic side of the membrane; that stretch reads RTSFSDPGVL…GNCVGKRNYR (98 aa). The DHHC domain occupies 165–215; it reads KYCFTCKIFRPPRASHCSLCDNCVEQFDHHCPWVGNCVGKRNYRFFYMFIL. Cys-195 acts as the S-palmitoyl cysteine intermediate in catalysis. A helical membrane pass occupies residues 209-229; the sequence is FFYMFILSLSFLTVFIFAFVI. The Lumenal segment spans residues 230–255; that stretch reads THVIHRSQQKGFLDALKDSPASVLEA. Residues 256-276 form a helical membrane-spanning segment; sequence VICFFSVWSIIGLSGFHTYLI. The Cytoplasmic segment spans residues 277 to 489; the sequence is SSNQTTNEDI…VRGLVKLSSV (213 aa). Residues 434–454 are disordered; it reads HGGHQFLTPDEAPSPPRMLGA. At Ser-456 the chain carries Phosphoserine.

Belongs to the DHHC palmitoyltransferase family. ERF2/ZDHHC9 subfamily.

It is found in the endoplasmic reticulum membrane. Its subcellular location is the golgi apparatus membrane. The enzyme catalyses L-cysteinyl-[protein] + hexadecanoyl-CoA = S-hexadecanoyl-L-cysteinyl-[protein] + CoA. In terms of biological role, palmitoyltransferase that could catalyze the addition of palmitate onto various protein substrates. May have a palmitoyltransferase activity toward the beta-2 adrenergic receptor/ADRB2 and thereby regulate G protein-coupled receptor signaling. May play a role in cell differentiation and apoptosis. In Mus musculus (Mouse), this protein is Palmitoyltransferase ZDHHC14.